Consider the following 234-residue polypeptide: UPF0104 membrane protein MJ1078 (234 aa).

The next 5 helical transmembrane spans lie at 32–52, 70–90, 123–143, 164–184, and 198–218; these read VGTV…LLFI, IKWG…FLIV, LITL…FIFL, LTAI…LIYI, and VLIL…AIMF.

Belongs to the UPF0104 family.

The protein resides in the cell membrane. This Methanocaldococcus jannaschii (strain ATCC 43067 / DSM 2661 / JAL-1 / JCM 10045 / NBRC 100440) (Methanococcus jannaschii) protein is UPF0104 membrane protein MJ1078.